Consider the following 453-residue polypeptide: Bifunctional protein GlmU (453 aa).

Residues 1-226 (MKFSTVILAA…SIEVEGVNDR (226 aa)) form a pyrophosphorylase region. UDP-N-acetyl-alpha-D-glucosamine is bound by residues 8–11 (LAAG), Lys-22, Gln-73, 78–79 (GT), 100–102 (YGD), Gly-137, Glu-151, Asn-166, and Asn-224. Mg(2+) is bound at residue Asp-102. Asn-224 serves as a coordination point for Mg(2+). Positions 227–247 (IQLARLERAFQARQAKKLLEQ) are linker. The tract at residues 248–453 (GVMLRDPARF…AGWQRPAKKK (206 aa)) is N-acetyltransferase. Arg-330 and Lys-348 together coordinate UDP-N-acetyl-alpha-D-glucosamine. Residue His-360 is the Proton acceptor of the active site. Residues Tyr-363 and Asn-374 each contribute to the UDP-N-acetyl-alpha-D-glucosamine site. Residues Ala-377, 383-384 (NY), Ser-402, Ala-420, and Arg-437 each bind acetyl-CoA.

The protein in the N-terminal section; belongs to the N-acetylglucosamine-1-phosphate uridyltransferase family. In the C-terminal section; belongs to the transferase hexapeptide repeat family. As to quaternary structure, homotrimer. Mg(2+) serves as cofactor.

The protein resides in the cytoplasm. It carries out the reaction alpha-D-glucosamine 1-phosphate + acetyl-CoA = N-acetyl-alpha-D-glucosamine 1-phosphate + CoA + H(+). The enzyme catalyses N-acetyl-alpha-D-glucosamine 1-phosphate + UTP + H(+) = UDP-N-acetyl-alpha-D-glucosamine + diphosphate. The protein operates within nucleotide-sugar biosynthesis; UDP-N-acetyl-alpha-D-glucosamine biosynthesis; N-acetyl-alpha-D-glucosamine 1-phosphate from alpha-D-glucosamine 6-phosphate (route II): step 2/2. It functions in the pathway nucleotide-sugar biosynthesis; UDP-N-acetyl-alpha-D-glucosamine biosynthesis; UDP-N-acetyl-alpha-D-glucosamine from N-acetyl-alpha-D-glucosamine 1-phosphate: step 1/1. It participates in bacterial outer membrane biogenesis; LPS lipid A biosynthesis. Its function is as follows. Catalyzes the last two sequential reactions in the de novo biosynthetic pathway for UDP-N-acetylglucosamine (UDP-GlcNAc). The C-terminal domain catalyzes the transfer of acetyl group from acetyl coenzyme A to glucosamine-1-phosphate (GlcN-1-P) to produce N-acetylglucosamine-1-phosphate (GlcNAc-1-P), which is converted into UDP-GlcNAc by the transfer of uridine 5-monophosphate (from uridine 5-triphosphate), a reaction catalyzed by the N-terminal domain. The chain is Bifunctional protein GlmU from Vibrio cholerae serotype O1 (strain M66-2).